We begin with the raw amino-acid sequence, 434 residues long: Angio-associated migratory cell protein (434 aa).

A disordered region spans residues 1 to 63 (MESESESGAA…EEEEEEGNEE (63 aa)). A Phosphoserine modification is found at Ser-20. Over residues 39 to 62 (DPDDLAQEMEDVDFEEEEEEEGNE) the composition is skewed to acidic residues. 8 WD repeats span residues 89-129 (LHSA…LLFE), 132-171 (GHKD…EVWS), 173-212 (EAGD…KTFQ), 214-254 (PNCP…HVLK), 258-299 (GHQG…GVFR), 315-354 (SESN…LRHQ), 356-395 (QHQS…LLTD), and 398-433 (GHTA…QRPD).

In terms of tissue distribution, expressed in metastatic melanoma, liver, skin, kidney, heart, lung, lymph node, skeletal muscle and brain, and also in A2058 melanoma cells and activated T-cells (at protein level). Expressed in blood vessels. Strongly expressed in endothelial cells, cytotrophoblasts, and poorly differentiated. colon adenocarcinoma cells found in lymphatics.

It localises to the cell membrane. Its subcellular location is the cytoplasm. Plays a role in angiogenesis and cell migration. In smooth muscle cell migration, may act through the RhoA pathway. This Homo sapiens (Human) protein is Angio-associated migratory cell protein (AAMP).